The chain runs to 432 residues: MTQLEYALSGIVTKEMKIVAEYEGVDEEFILEGVKKGEIVIPSNINHKNLIPKGIGRGLSTKVNANIGTSDAYPEIEKEIEKLNVAVKAGADAVMDLSTGGDINQSCRKILENSPVPVGTVPMYQAAVESISKYGSIVAMPEEFIFEVIEEQAKDGVDFITVHCGLTFESLKKLKDNGRVMDIVSRGGSFTIAWMLHNNKENPLYKHFDRLLDIAKKYDITLSLGDGLRPGCLEDATDAAQIQELIILGELVKKSREAGVQVMVEGPGHVPIDQIEANVKLQKQLCHNAPFYVLGPIVTDIAPGYDHITSAIGGAIAAASGADFLCYVTPAEHLGLPDKEDVKEGVIAAKIAAHAADIAKGVKGAKEKDLTMARARKALNWDEQIKLSIDPDKAFKYRVNKNISTAKTCSMCGKFCAMKIVSEYLGTSTMTC.

Residues N66, M95, Y124, H163, 185 to 187 (SRG), 226 to 229 (DGLR), and E265 contribute to the substrate site. A Zn(2+)-binding site is contributed by H269. Residue Y292 coordinates substrate. Residue H333 participates in Zn(2+) binding. 3 residues coordinate [4Fe-4S] cluster: C409, C412, and C416.

It belongs to the ThiC family. It depends on [4Fe-4S] cluster as a cofactor.

It carries out the reaction 5-amino-1-(5-phospho-beta-D-ribosyl)imidazole + S-adenosyl-L-methionine = 4-amino-2-methyl-5-(phosphooxymethyl)pyrimidine + CO + 5'-deoxyadenosine + formate + L-methionine + 3 H(+). It participates in cofactor biosynthesis; thiamine diphosphate biosynthesis. Catalyzes the synthesis of the hydroxymethylpyrimidine phosphate (HMP-P) moiety of thiamine from aminoimidazole ribotide (AIR) in a radical S-adenosyl-L-methionine (SAM)-dependent reaction. The chain is Phosphomethylpyrimidine synthase from Thermoanaerobacter pseudethanolicus (strain ATCC 33223 / 39E) (Clostridium thermohydrosulfuricum).